The following is a 335-amino-acid chain: Oligopeptide transport ATP-binding protein OppD (335 aa).

Residues 18-267 (LEVNDLRVTF…PVHPYSIGLL (250 aa)) form the ABC transporter domain. Position 54–61 (54–61 (GESGSGKS)) interacts with ATP.

Belongs to the ABC transporter superfamily. The complex is composed of two ATP-binding proteins (OppD and OppF), two transmembrane proteins (OppB and OppC) and a solute-binding protein (OppA).

The protein localises to the cell inner membrane. The catalysed reaction is a [peptide](out) + ATP + H2O = a [peptide](in) + ADP + phosphate + H(+). The enzyme catalyses L-alanyl-gamma-D-glutamyl-meso-2,6-diaminopimelate(out) + ATP + H2O = L-alanyl-gamma-D-glutamyl-meso-2,6-diaminopimelate(in) + ADP + phosphate + H(+). Its function is as follows. Part of the ABC transporter complex OppABCDF involved in the uptake of oligopeptides, including the cell wall murein tripeptide L-alanyl-gamma-D-glutamyl-meso-diaminopimelate. Responsible for energy coupling to the transport system. Plays an important nutritional role and is involved in the recycling of cell wall peptides. Binds ATP. The polypeptide is Oligopeptide transport ATP-binding protein OppD (Salmonella typhimurium (strain LT2 / SGSC1412 / ATCC 700720)).